Here is a 202-residue protein sequence, read N- to C-terminus: Large ribosomal subunit protein bL17 (202 aa).

Over residues 130–142 (AAPAATAPAPVEE) the composition is skewed to low complexity. Residues 130–202 (AAPAATAPAP…TEESTEDDKA (73 aa)) are disordered. 2 stretches are compositionally biased toward acidic residues: residues 143–168 (APAEETVAEETAVEEAPTELTDEASP) and 177–202 (QPVEDEAATEEPAAESTEESTEDDKA).

It belongs to the bacterial ribosomal protein bL17 family. As to quaternary structure, part of the 50S ribosomal subunit. Contacts protein L32.

In Nocardioides sp. (strain ATCC BAA-499 / JS614), this protein is Large ribosomal subunit protein bL17.